The sequence spans 144 residues: ATP synthase subunit 9, mitochondrial (144 aa).

The N-terminal 63 residues, 1-63 (MASTRVLASR…ATRQITQKRA (63 aa)), are a transit peptide targeting the mitochondrion. 2 helical membrane passes run 83 to 103 (TAAI…AALL) and 120 to 140 (AILG…VALM).

This sequence belongs to the ATPase C chain family. In terms of assembly, F-type ATPases have 2 components, CF(1) - the catalytic core - and CF(0) - the membrane proton channel. CF(1) has five subunits: alpha(3), beta(3), gamma(1), delta(1), epsilon(1). CF(0) has three main subunits: a, b and c.

It is found in the mitochondrion membrane. Mitochondrial membrane ATP synthase (F(1)F(0) ATP synthase or Complex V) produces ATP from ADP in the presence of a proton gradient across the membrane which is generated by electron transport complexes of the respiratory chain. F-type ATPases consist of two structural domains, F(1) - containing the extramembraneous catalytic core and F(0) - containing the membrane proton channel, linked together by a central stalk and a peripheral stalk. During catalysis, ATP synthesis in the catalytic domain of F(1) is coupled via a rotary mechanism of the central stalk subunits to proton translocation. Part of the complex F(0) domain. A homomeric c-ring of probably 10 subunits is part of the complex rotary element. The sequence is that of ATP synthase subunit 9, mitochondrial (ATP9) from Podospora anserina (Pleurage anserina).